A 335-amino-acid chain; its full sequence is Nucleoid-associated protein YejK (335 aa).

The protein belongs to the YejK family.

It is found in the cytoplasm. It localises to the nucleoid. This Shigella sonnei (strain Ss046) protein is Nucleoid-associated protein YejK.